The primary structure comprises 359 residues: Histamine H2 receptor (359 aa).

Residues 1-22 (MAPNGTASSFCLDSTACKITIT) lie on the Extracellular side of the membrane. N4 carries N-linked (GlcNAc...) asparagine glycosylation. The helical transmembrane segment at 23-44 (VVLAVLILITVAGNVVVCLAVG) threads the bilayer. Topologically, residues 45–57 (LNRRLRNLTNCFI) are cytoplasmic. A helical membrane pass occupies residues 58-81 (VSLAITDLLLGLLVLPFSAIYQLS). Topologically, residues 82 to 92 (CKWSFGKVFCN) are extracellular. A disulfide bridge connects residues C91 and C174. Residues 93–114 (IYTSLDVMLCTASILNLFMISL) form a helical membrane-spanning segment. Topologically, residues 115-134 (DRYCAVMDPLRYPVLVTPVR) are cytoplasmic. Residues 135–159 (VAISLVLIWVISITLSFLSIHLGWN) traverse the membrane as a helical segment. The Extracellular portion of the chain corresponds to 160–180 (SRNETSKGNHTTSKCKVQVNE). A helical transmembrane segment spans residues 181 to 204 (VYGLVDGLVTFYLPLLIMCITYYR). Residues 205–234 (IFKVARDQAKRINHISSWKAATIREHKATV) lie on the Cytoplasmic side of the membrane. A helical transmembrane segment spans residues 235-258 (TLAAVMGAFIICWFPYFTAFVYRG). At 259–267 (LRGDDAINE) the chain is on the extracellular side. Residues 268–289 (VLEAIVLWLGYANSALNPILYA) form a helical membrane-spanning segment. Residues 290 to 359 (ALNRDFRTGY…VTAPQGATDR (70 aa)) lie on the Cytoplasmic side of the membrane. A lipid anchor (S-palmitoyl cysteine) is attached at C305. The tract at residues 316 to 340 (SLRSNASQLSRTQSREPRQQEEKPL) is disordered. Positions 317–327 (LRSNASQLSRT) are enriched in polar residues. A compositionally biased stretch (basic and acidic residues) spans 328-340 (QSREPRQQEEKPL).

It belongs to the G-protein coupled receptor 1 family.

Its subcellular location is the cell membrane. Its function is as follows. The H2 subclass of histamine receptors mediates gastric acid secretion. Also appears to regulate gastrointestinal motility and intestinal secretion. Possible role in regulating cell growth and differentiation. The activity of this receptor is mediated by G proteins which activate adenylyl cyclase and, through a separate G protein-dependent mechanism, the phosphoinositide/protein kinase (PKC) signaling pathway. The polypeptide is Histamine H2 receptor (HRH2) (Gorilla gorilla gorilla (Western lowland gorilla)).